Here is a 29-residue protein sequence, read N- to C-terminus: Conotoxin pr6a (29 aa).

Intrachain disulfides connect C2-C20, C9-C24, and C19-C28.

As to expression, expressed by the venom duct.

It is found in the secreted. Its function is as follows. Intraperitoneal injection into fish (1 nmol) provokes hyperactivity and erratic swimming in various directions after 14 minutes. The sequence is that of Conotoxin pr6a from Conus parius (Cone snail).